A 338-amino-acid chain; its full sequence is tRNA N6-adenosine threonylcarbamoyltransferase (338 aa).

Residues His110 and His114 each coordinate Fe cation. Substrate-binding positions include 132-136 (ILSGG), Asp165, Gly178, and Asn274. Position 298 (Asp298) interacts with Fe cation.

This sequence belongs to the KAE1 / TsaD family. It depends on Fe(2+) as a cofactor.

The protein localises to the cytoplasm. The catalysed reaction is L-threonylcarbamoyladenylate + adenosine(37) in tRNA = N(6)-L-threonylcarbamoyladenosine(37) in tRNA + AMP + H(+). Its function is as follows. Required for the formation of a threonylcarbamoyl group on adenosine at position 37 (t(6)A37) in tRNAs that read codons beginning with adenine. Is involved in the transfer of the threonylcarbamoyl moiety of threonylcarbamoyl-AMP (TC-AMP) to the N6 group of A37, together with TsaE and TsaB. TsaD likely plays a direct catalytic role in this reaction. In Borrelia hermsii (strain HS1 / DAH), this protein is tRNA N6-adenosine threonylcarbamoyltransferase.